The sequence spans 487 residues: uncharacterized protein (487 aa).

A helical transmembrane segment spans residues 7–28 (HVISIFETLGAYFINIFYNFLY). N73, N83, and N195 each carry an N-linked (GlcNAc...) asparagine; by host glycan. A coiled-coil region spans residues 196-235 (RSLLHQIEELTSEKKSLLADLSTLRKKYEKRQSEYRRLVQ). Positions 294–305 (TSQELTSKSPNN) are enriched in polar residues. The tract at residues 294–324 (TSQELTSKSPNNYPVPHSRTIVSKPSDNYPV) is disordered. N462 is a glycosylation site (N-linked (GlcNAc...) asparagine; by host).

Belongs to the asfivirus B475L family.

It is found in the host membrane. This is an uncharacterized protein from African swine fever virus (isolate Tick/South Africa/Pretoriuskop Pr4/1996) (ASFV).